Reading from the N-terminus, the 313-residue chain is Intelectin-1a (313 aa).

The N-terminal stretch at 1–18 (MTQLGFLLFIMVATRGCS) is a signal peptide. The 220-residue stretch at 32–251 (SFFSSLPRSC…NNERAASALC (220 aa)) folds into the Fibrinogen C-terminal domain. Residues Cys-41 and Cys-70 are joined by a disulfide bond. Positions 86, 87, 89, 92, 97, 98, and 133 each coordinate Ca(2+). Intrachain disulfides connect Cys-94/Cys-280, Cys-199/Cys-259, and Cys-251/Cys-265. Ca(2+)-binding residues include Asn-260, Glu-262, Glu-274, and Asp-282. Residues 262-263 (EH) and Glu-274 contribute to the a carbohydrate site. Ser-298 is lipidated: GPI-anchor amidated serine. Positions 299 to 313 (SSRKITEAAVLLFYR) are excised as a propeptide.

Monomer. May interact with LTF. As to expression, expressed in small intestinal Paneth cells in uninfected mice. Expression also detected in various other tissues including stomach, kidney, ovary and brain.

Its subcellular location is the cell membrane. The protein resides in the secreted. Lectin that specifically recognizes microbial carbohydrate chains in a calcium-dependent manner. Binds to microbial glycans that contain a terminal acyclic 1,2-diol moiety, including beta-linked D-galactofuranose (beta-Galf), D-phosphoglycerol-modified glycans, D-glycero-D-talo-oct-2-ulosonic acid (KO) and 3-deoxy-D-manno-oct-2-ulosonic acid (KDO). Binds to glycans from Gram-positive and Gram-negative bacteria, including K.pneumoniae, S.pneumoniae, Y.pestis, P.mirabilis and P.vulgaris. Does not bind mammalian glycans. Probably plays a role in the defense system against microorganisms. May function as adipokine that has no effect on basal glucose uptake but enhances insulin-stimulated glucose uptake in adipocytes. Increases AKT phosphorylation in the absence and presence of insulin. May interact with lactoferrin/LTF and increase its uptake, and may thereby play a role in iron absorption. The sequence is that of Intelectin-1a (Itln1) from Mus musculus (Mouse).